The chain runs to 488 residues: Cysteine--tRNA ligase (488 aa).

Cysteine 28 contributes to the Zn(2+) binding site. A 'HIGH' region motif is present at residues 30–40 (PTVYDDAHLGH). 3 residues coordinate Zn(2+): cysteine 209, histidine 239, and glutamate 243. The short motif at 271–275 (KMSKS) is the 'KMSKS' region element. Lysine 274 is an ATP binding site.

It belongs to the class-I aminoacyl-tRNA synthetase family. As to quaternary structure, monomer. Requires Zn(2+) as cofactor.

The protein localises to the cytoplasm. The enzyme catalyses tRNA(Cys) + L-cysteine + ATP = L-cysteinyl-tRNA(Cys) + AMP + diphosphate. This is Cysteine--tRNA ligase from Helicobacter hepaticus (strain ATCC 51449 / 3B1).